The primary structure comprises 99 residues: High mobility group nucleosome-binding domain-containing protein 3 (99 aa).

3 stretches are compositionally biased toward basic and acidic residues: residues 1-25 (MPKRKSPENTEGKDGSKVTKQEPTR), 39-53 (PEPKPRKTSAKKEPG), and 62-72 (GKKEEKQEAGK). A disordered region spans residues 1–99 (MPKRKSPENT…KTESVDNEGE (99 aa)). At serine 6 the chain carries Phosphoserine. Threonine 10 bears the Phosphothreonine mark. Serine 78 and serine 93 each carry phosphoserine. The span at 81-93 (GETKAEEAQKTES) shows a compositional bias: basic and acidic residues.

The protein belongs to the HMGN family. As to quaternary structure, interacts with the ligand binding domain of the thyroid receptor (TR) (in vitro). Requires the presence of thyroid hormone for its interaction. Interacts with transcriptional regulator SEHBP. Interacts with nucleosomes. In terms of tissue distribution, expressed in kidney, lung, pancreas, testis, skeletal muscle, heart, thyroid gland, pituitary gland, prostate and uterus. Low expression in liver, spleen, placenta and ovaries.

Its subcellular location is the nucleus. Functionally, binds to nucleosomes, regulating chromatin structure and consequently, chromatin-dependent processes such as transcription, DNA replication and DNA repair. Affects both insulin and glucagon levels and modulates the expression of pancreatic genes involved in insulin secretion. Regulates the expression of the glucose transporter SLC2A2 by binding specifically to its promoter region and recruiting PDX1 and additional transcription factors. Regulates the expression of SLC6A9, a glycine transporter which regulates the glycine concentration in synaptic junctions in the central nervous system, by binding to its transcription start site. May play a role in ocular development and astrocyte function. This is High mobility group nucleosome-binding domain-containing protein 3 (HMGN3) from Homo sapiens (Human).